We begin with the raw amino-acid sequence, 102 residues long: Small ribosomal subunit protein uS10 (102 aa).

This sequence belongs to the universal ribosomal protein uS10 family. As to quaternary structure, part of the 30S ribosomal subunit.

Involved in the binding of tRNA to the ribosomes. In Nitrosopumilus maritimus (strain SCM1), this protein is Small ribosomal subunit protein uS10.